The primary structure comprises 114 residues: Putative pterin-4-alpha-carbinolamine dehydratase (114 aa).

It belongs to the pterin-4-alpha-carbinolamine dehydratase family.

The catalysed reaction is (4aS,6R)-4a-hydroxy-L-erythro-5,6,7,8-tetrahydrobiopterin = (6R)-L-erythro-6,7-dihydrobiopterin + H2O. In Chlorobium luteolum (strain DSM 273 / BCRC 81028 / 2530) (Pelodictyon luteolum), this protein is Putative pterin-4-alpha-carbinolamine dehydratase.